Consider the following 251-residue polypeptide: uncharacterized protein (251 aa).

This is an uncharacterized protein from Caenorhabditis elegans.